A 469-amino-acid chain; its full sequence is 3-isopropylmalate dehydratase large subunit 1 (469 aa).

[4Fe-4S] cluster contacts are provided by cysteine 344, cysteine 404, and cysteine 407.

It belongs to the aconitase/IPM isomerase family. LeuC type 1 subfamily. As to quaternary structure, heterodimer of LeuC and LeuD. [4Fe-4S] cluster serves as cofactor.

It carries out the reaction (2R,3S)-3-isopropylmalate = (2S)-2-isopropylmalate. Its pathway is amino-acid biosynthesis; L-leucine biosynthesis; L-leucine from 3-methyl-2-oxobutanoate: step 2/4. In terms of biological role, catalyzes the isomerization between 2-isopropylmalate and 3-isopropylmalate, via the formation of 2-isopropylmaleate. In Rubrobacter xylanophilus (strain DSM 9941 / JCM 11954 / NBRC 16129 / PRD-1), this protein is 3-isopropylmalate dehydratase large subunit 1.